Reading from the N-terminus, the 322-residue chain is Lymphokine-activated killer T-cell-originated protein kinase (322 aa).

Methionine 1 carries the N-acetylmethionine modification. Phosphothreonine occurs at positions 9 and 24. Serine 32 bears the Phosphoserine mark. Positions 32–322 constitute a Protein kinase domain; the sequence is SPFMQKLGFG…HIVEALETDV (291 aa). 38–46 serves as a coordination point for ATP; the sequence is LGFGTGVNV. Position 59 is a phosphoserine (serine 59). Residue lysine 64 coordinates ATP. Aspartate 167 (proton acceptor) is an active-site residue. Residue lysine 169 forms a Glycyl lysine isopeptide (Lys-Gly) (interchain with G-Cter in SUMO2) linkage. The PDZ-interaction stretch occupies residues 320 to 322; it reads TDV.

Belongs to the protein kinase superfamily. STE Ser/Thr protein kinase family. MAP kinase kinase subfamily. Interacts with DLG1 and TP53. In terms of processing, phosphorylated; in a cell-cycle dependent manner at mitosis. As to expression, expressed in the testis and placenta. In the testis, restrictedly expressed in outer cell layer of seminiferous tubules.

It carries out the reaction L-seryl-[protein] + ATP = O-phospho-L-seryl-[protein] + ADP + H(+). It catalyses the reaction L-threonyl-[protein] + ATP = O-phospho-L-threonyl-[protein] + ADP + H(+). The enzyme catalyses L-tyrosyl-[protein] + ATP = O-phospho-L-tyrosyl-[protein] + ADP + H(+). With respect to regulation, activated by phosphorylation. Functionally, phosphorylates MAP kinase p38. Seems to be active only in mitosis. May also play a role in the activation of lymphoid cells. When phosphorylated, forms a complex with TP53, leading to TP53 destabilization and attenuation of G2/M checkpoint during doxorubicin-induced DNA damage. The polypeptide is Lymphokine-activated killer T-cell-originated protein kinase (PBK) (Homo sapiens (Human)).